The following is a 1241-amino-acid chain: Interphotoreceptor matrix proteoglycan 2 (1241 aa).

A signal peptide spans 1-22 (MIMFPLFGKISLGILIFVLIEG). Over 23-1099 (DFPSLTAQTY…KHCEEFVSEP (1077 aa)) the chain is Extracellular. A glycan (N-linked (GlcNAc...) asparagine) is linked at Asn154. Residues 180 to 223 (ELSSPVPVGDTSTLGDTTLSVPHPEVDAYEGASESSLERPEESI) are disordered. The segment covering 189-199 (DTSTLGDTTLS) has biased composition (polar residues). O-linked (GalNAc...) threonine glycosylation is found at Thr190 and Thr192. An SEA 1 domain is found at 239 to 353 (GEQIAEFSIH…KPTVVYTISN (115 aa)). Residues 259–267 (QDSSSFHHQ) are hyaluronan-binding motif involved in chondroitin sulfate A-binding. Asn301, Asn320, and Asn370 each carry an N-linked (GlcNAc...) asparagine glycan. 2 O-linked (GalNAc...) threonine glycosylation sites follow: Thr544 and Thr556. Residues 660-678 (QISKHSKYEHDDRSTHFPE) are compositionally biased toward basic and acidic residues. A disordered region spans residues 660–684 (QISKHSKYEHDDRSTHFPEEEPLSG). The SEA 2 domain maps to 897–1010 (GALVVFFSLR…YSLDVESGDE (114 aa)). Asn942 and Asn956 each carry an N-linked (GlcNAc...) asparagine glycan. 2 EGF-like domains span residues 1010–1051 (EANP…RPCQ) and 1052–1093 (SLCD…KHCE). Cystine bridges form between Cys1014-Cys1025, Cys1019-Cys1036, Cys1038-Cys1050, Cys1054-Cys1067, Cys1061-Cys1077, and Cys1079-Cys1092. The hyaluronan-binding motif involved in chondroitin sulfate C-binding stretch occupies residues 1080 to 1088 (RVGENWWYR). Residues 1100–1120 (VIIGITIASVVGLLVIFSAII) traverse the membrane as a helical segment. Residues 1121–1241 (YFFIRTLQAH…FVREQQVEEV (121 aa)) lie on the Cytoplasmic side of the membrane. Positions 1125–1133 (RTLQAHHDR) are hyaluronan-binding motif involved in chondroitin sulfate A- and C-binding. Residues 1136-1145 (RESPFSGSSR) form a hyaluronan-binding motif involved in chondroitin sulfate C-binding region. The interval 1210–1218 (REEIQERMR) is hyaluronan-binding motif involved in chondroitin sulfate A- and C-binding motif.

Highly glycosylated (N- and O-linked carbohydrates). Expressed in the retina (at protein level). Expressed by photoreceptors of the interphotoreceptor matrix (IPM) surrounding both rods and cones (at protein level). IPM occupies the subretinal space between the apices of the retinal pigment epithelium and the neural retina. Expressed in the pineal gland (at protein level).

It localises to the photoreceptor outer segment membrane. Its subcellular location is the photoreceptor inner segment membrane. The protein resides in the secreted. It is found in the extracellular space. The protein localises to the extracellular matrix. It localises to the interphotoreceptor matrix. Chondroitin sulfate- and hyaluronan-binding proteoglycan involved in the organization of interphotoreceptor matrix; may participate in the maturation and maintenance of the light-sensitive photoreceptor outer segment. Binds heparin. The polypeptide is Interphotoreceptor matrix proteoglycan 2 (IMPG2) (Homo sapiens (Human)).